Consider the following 416-residue polypeptide: Type II methyltransferase M.PspPI (416 aa).

One can recognise an SAM-dependent MTase C5-type domain in the interval 77–410 (YSLVELFAGA…KAIIRMLNAA (334 aa)). Cys149 is an active-site residue.

The protein belongs to the class I-like SAM-binding methyltransferase superfamily. C5-methyltransferase family.

It catalyses the reaction a 2'-deoxycytidine in DNA + S-adenosyl-L-methionine = a 5-methyl-2'-deoxycytidine in DNA + S-adenosyl-L-homocysteine + H(+). In terms of biological role, a methylase, recognizes the double-stranded sequence 5'-GGNCC-3', methylates C-4 on both strands, and protects the DNA from cleavage by the PspPI endonuclease. The protein is Type II methyltransferase M.PspPI of Psychrobacter sp. (strain TA137).